A 1158-amino-acid chain; its full sequence is Rho1 guanine nucleotide exchange factor 2 (1158 aa).

The interval 42–141 is disordered; that stretch reads RSSGSITHSP…SFSVSDVSNG (100 aa). A compositionally biased stretch (polar residues) spans 45–63; the sequence is GSITHSPTALSSTTSLNEN. Positions 68-81 are enriched in low complexity; sequence FRPASSLSFSPSSL. Over residues 97 to 108 the composition is skewed to polar residues; sequence KNNFYRRSSSTD. Low complexity predominate over residues 132 to 141; sequence SFSVSDVSNG. A DH domain is found at 447 to 634; it reads KRQEIIFEVI…REFLTKLNYE (188 aa). Residues 670 to 805 form the PH domain; it reads LIFKGVVKLK…QHIEKQQDII (136 aa). Residues serine 746 and serine 747 each carry the phosphoserine modification. Residues 825–1120 form the CNH domain; sequence GNKLLCAVAY…KLLTDGRGLI (296 aa).

It is found in the cytoplasm. Functionally, stimulates the exchange of Rho1 and Rho5 GDP-bound form into GTP-bound form. Controls septum formation, cell wall synthesis and localization of F-actin patches. The sequence is that of Rho1 guanine nucleotide exchange factor 2 (rgf2) from Schizosaccharomyces pombe (strain 972 / ATCC 24843) (Fission yeast).